Consider the following 1596-residue polypeptide: Protein son of sevenless (1596 aa).

One can recognise a DH domain in the interval 248–434 (TYEETVKELI…HPLHCDLEKV (187 aa)). The 109-residue stretch at 480-588 (EFIREDSLSK…WMADLLMVIT (109 aa)) folds into the PH domain. An N-terminal Ras-GEF domain is found at 637-792 (GVPMIKGATL…SVLKIVQRKN (156 aa)). Residues 829–1066 (HPLELARQLT…YNESLRIEPR (238 aa)) form the Ras-GEF domain. Disordered regions lie at residues 1073–1105 (KFPRKWPHIPLKSPGIKPRRQNQTNSSSKLSNS), 1175–1212 (RNTSSWSGTPQHTRTDQNNGEVSVPAPHLPKKPGAHVW), 1235–1291 (EHLP…TAST), 1340–1392 (RAVP…NHST), and 1465–1596 (PLPI…TNEE). Low complexity predominate over residues 1096–1105 (TNSSSKLSNS). Composition is skewed to polar residues over residues 1175 to 1195 (RNTSSWSGTPQHTRTDQNNGE) and 1280 to 1291 (MQNSPTHSTAST). Positions 1352-1366 (ERTESCADMAQKRQA) are enriched in basic and acidic residues. Over residues 1469–1489 (SPAASSSTTTSPLTPAMSPMS) the composition is skewed to low complexity. Basic residues predominate over residues 1526 to 1542 (HHQHHATHLPHHPHQHH). 2 positions are modified to phosphoserine: S1550 and S1551.

May form a complex with sevenless and DRK.

In terms of biological role, promotes the exchange of Ras-bound GDP by GTP. Functions in signaling pathways initiated by the sevenless and epidermal growth factor receptor tyrosine kinases; implies a role for the ras pathway in neuronal development. The sequence is that of Protein son of sevenless (Sos) from Drosophila melanogaster (Fruit fly).